We begin with the raw amino-acid sequence, 382 residues long: GDP-mannose transporter 1 (382 aa).

The Cytoplasmic portion of the chain corresponds to M1 to Q40. The chain crosses the membrane as a helical span at residues L41–V61. At M62–D71 the chain is on the lumenal side. A helical membrane pass occupies residues F72 to T92. Residues C93 to K110 lie on the Cytoplasmic side of the membrane. The chain crosses the membrane as a helical span at residues K111 to S127. Over K128 to S134 the chain is Lumenal. A helical transmembrane segment spans residues I135 to Y151. At G152–S160 the chain is on the cytoplasmic side. The chain crosses the membrane as a helical span at residues V161–A182. Over D183–T200 the chain is Lumenal. Residues L201 to G221 traverse the membrane as a helical segment. Residues M222 to D233 are Cytoplasmic-facing. A helical membrane pass occupies residues F234–L254. The Lumenal portion of the chain corresponds to M255–G274. Residues I275–W295 form a helical membrane-spanning segment. At C296–T303 the chain is on the cytoplasmic side. The helical transmembrane segment at T304–F324 threads the bilayer. The Lumenal segment spans residues D325–P327. A helical transmembrane segment spans residues V328–V348. Residues A349–S382 are Cytoplasmic-facing. The disordered stretch occupies residues K358–S382. Polar residues predominate over residues P367–S382.

Belongs to the TPT transporter family. SLC35D subfamily. As to quaternary structure, homooligomer.

The protein resides in the golgi apparatus membrane. The protein localises to the cytoplasmic vesicle membrane. It localises to the endoplasmic reticulum membrane. Its function is as follows. Involved in the import of GDP-mannose from the cytoplasm into the Golgi lumen. This is GDP-mannose transporter 1 (gmt1) from Neosartorya fischeri (strain ATCC 1020 / DSM 3700 / CBS 544.65 / FGSC A1164 / JCM 1740 / NRRL 181 / WB 181) (Aspergillus fischerianus).